An 85-amino-acid polypeptide reads, in one-letter code: uncharacterized protein (85 aa).

The next 2 helical transmembrane spans lie at Ile-20–Leu-42 and Ile-52–Tyr-69.

It localises to the membrane. This is an uncharacterized protein from Saccharomyces cerevisiae (strain ATCC 204508 / S288c) (Baker's yeast).